Consider the following 69-residue polypeptide: Protein hunchback (69 aa).

3 consecutive C2H2-type zinc fingers follow at residues 1–11 (KHHLEYHLRNH), 17–39 (FKCE…LKSH), and 45–69 (YRCA…KYSH).

The protein belongs to the hunchback C2H2-type zinc-finger protein family.

The protein localises to the nucleus. Functionally, gap class segmentation protein that controls development of head structures. The polypeptide is Protein hunchback (hb) (Apis mellifera (Honeybee)).